The chain runs to 542 residues: Prolyl 3-hydroxylase OGFOD1 (542 aa).

Positions 134–239 (DLESTIDMSC…RLSISGWFHG (106 aa)) constitute a Fe2OG dioxygenase domain. 2 residues coordinate Fe cation: histidine 155 and aspartate 157. Tyrosine 169 provides a ligand contact to 2-oxoglutarate. Position 218 (histidine 218) interacts with Fe cation. Position 230 (arginine 230) interacts with 2-oxoglutarate. The tract at residues 373-435 (EDEMNDKKEA…TKKESSVPTC (63 aa)) is disordered. A compositionally biased stretch (polar residues) spans 400-416 (ENNQTAISNNSQQSNEQ).

The protein belongs to the TPA1 family. As to quaternary structure, monomer. Fe(2+) is required as a cofactor. Requires L-ascorbate as cofactor.

The protein resides in the cytoplasm. It localises to the nucleus. The catalysed reaction is [ribosomal protein uS12]-L-proline + 2-oxoglutarate + O2 = [ribosomal protein uS12]-(3S)-3-hydroxy-L-proline + succinate + CO2. Functionally, prolyl 3-hydroxylase that catalyzes 3-hydroxylation of 'Pro-62' of small ribosomal subunit uS12 (RPS23), thereby regulating protein translation termination efficiency. Involved in stress granule formation. The protein is Prolyl 3-hydroxylase OGFOD1 (OGFOD1) of Pongo abelii (Sumatran orangutan).